Consider the following 196-residue polypeptide: Phosphoheptose isomerase (196 aa).

In terms of domain architecture, SIS spans 33 to 192; sequence LIQSLKNGGK…ESECGENGNT (160 aa). Residue 48-50 coordinates substrate; it reads NGG. Zn(2+) contacts are provided by His-57 and Glu-61. Residues Glu-61, 90–91, 116–118, Ser-121, and Gln-168 contribute to the substrate site; these read ND and STS. Residues Gln-168 and His-176 each contribute to the Zn(2+) site.

The protein belongs to the SIS family. GmhA subfamily. As to quaternary structure, homotetramer. Zn(2+) is required as a cofactor.

Its subcellular location is the cytoplasm. It catalyses the reaction 2 D-sedoheptulose 7-phosphate = D-glycero-alpha-D-manno-heptose 7-phosphate + D-glycero-beta-D-manno-heptose 7-phosphate. The protein operates within carbohydrate biosynthesis; D-glycero-D-manno-heptose 7-phosphate biosynthesis; D-glycero-alpha-D-manno-heptose 7-phosphate and D-glycero-beta-D-manno-heptose 7-phosphate from sedoheptulose 7-phosphate: step 1/1. In terms of biological role, catalyzes the isomerization of sedoheptulose 7-phosphate in D-glycero-D-manno-heptose 7-phosphate. This is Phosphoheptose isomerase from Helicobacter hepaticus (strain ATCC 51449 / 3B1).